Here is a 2185-residue protein sequence, read N- to C-terminus: DNA polymerase epsilon catalytic subunit A (2185 aa).

Residues Cys2072, Cys2075, Cys2094, and Cys2097 each contribute to the Zn(2+) site. The CysA-type zinc finger occupies 2072-2097; sequence CEHCSYISDIDICRESMERVFICQSC. Residues Cys2128, Cys2131, Cys2143, and Cys2145 each coordinate [4Fe-4S] cluster. The short motif at 2128 to 2145 is the CysB motif element; it reads CNKCHKIKEDAMSPYCPC.

This sequence belongs to the DNA polymerase type-B family. As to quaternary structure, heterotetramer. Consists of 4 subunits: POL2, DPB2, DPB3 and DPB4. Requires [4Fe-4S] cluster as cofactor.

It is found in the nucleus. It carries out the reaction DNA(n) + a 2'-deoxyribonucleoside 5'-triphosphate = DNA(n+1) + diphosphate. Its function is as follows. DNA polymerase II participates in chromosomal DNA replication. The chain is DNA polymerase epsilon catalytic subunit A (POL2) from Kluyveromyces lactis (strain ATCC 8585 / CBS 2359 / DSM 70799 / NBRC 1267 / NRRL Y-1140 / WM37) (Yeast).